Consider the following 169-residue polypeptide: Phosphopantetheine adenylyltransferase (169 aa).

Thr14 serves as a coordination point for substrate. ATP-binding positions include 14-15 and His22; that span reads TF. Positions 46, 78, and 92 each coordinate substrate. Residues 93-95, Glu103, and 128-134 each bind ATP; these read GLR and HSFISSS.

It belongs to the bacterial CoaD family. As to quaternary structure, homohexamer. Mg(2+) is required as a cofactor.

The protein localises to the cytoplasm. It carries out the reaction (R)-4'-phosphopantetheine + ATP + H(+) = 3'-dephospho-CoA + diphosphate. The protein operates within cofactor biosynthesis; coenzyme A biosynthesis; CoA from (R)-pantothenate: step 4/5. Functionally, reversibly transfers an adenylyl group from ATP to 4'-phosphopantetheine, yielding dephospho-CoA (dPCoA) and pyrophosphate. This chain is Phosphopantetheine adenylyltransferase, found in Stenotrophomonas maltophilia (strain K279a).